The sequence spans 380 residues: Succinate--CoA ligase [ADP-forming] subunit beta 2 (380 aa).

Positions 9–235 (KQIFSKHGIR…YTEADQMERI (227 aa)) constitute an ATP-grasp domain. Residues Lys-45, 52-54 (GRG), Glu-91, Ile-94, and Glu-99 each bind ATP. 2 residues coordinate Mg(2+): Asn-191 and Asp-204. Residues Asn-255 and 312 to 314 (GIT) each bind substrate.

The protein belongs to the succinate/malate CoA ligase beta subunit family. Heterotetramer of two alpha and two beta subunits. The cofactor is Mg(2+).

The catalysed reaction is succinate + ATP + CoA = succinyl-CoA + ADP + phosphate. It catalyses the reaction GTP + succinate + CoA = succinyl-CoA + GDP + phosphate. It participates in carbohydrate metabolism; tricarboxylic acid cycle; succinate from succinyl-CoA (ligase route): step 1/1. Functionally, succinyl-CoA synthetase functions in the citric acid cycle (TCA), coupling the hydrolysis of succinyl-CoA to the synthesis of either ATP or GTP and thus represents the only step of substrate-level phosphorylation in the TCA. The beta subunit provides nucleotide specificity of the enzyme and binds the substrate succinate, while the binding sites for coenzyme A and phosphate are found in the alpha subunit. This is Succinate--CoA ligase [ADP-forming] subunit beta 2 from Archaeoglobus fulgidus (strain ATCC 49558 / DSM 4304 / JCM 9628 / NBRC 100126 / VC-16).